Consider the following 540-residue polypeptide: Glucose-6-phosphate isomerase (540 aa).

The Proton donor role is filled by glutamate 350. Residues histidine 381 and lysine 503 contribute to the active site.

Belongs to the GPI family.

It is found in the cytoplasm. It carries out the reaction alpha-D-glucose 6-phosphate = beta-D-fructose 6-phosphate. It functions in the pathway carbohydrate biosynthesis; gluconeogenesis. The protein operates within carbohydrate degradation; glycolysis; D-glyceraldehyde 3-phosphate and glycerone phosphate from D-glucose: step 2/4. Catalyzes the reversible isomerization of glucose-6-phosphate to fructose-6-phosphate. The polypeptide is Glucose-6-phosphate isomerase (Burkholderia pseudomallei (strain 1106a)).